The sequence spans 591 residues: L-fucose isomerase (591 aa).

Active-site proton acceptor residues include Glu-337 and Asp-361. Residues Glu-337, Asp-361, and His-528 each contribute to the Mn(2+) site.

It belongs to the L-fucose isomerase family. Homohexamer. The cofactor is Mn(2+).

Its subcellular location is the cytoplasm. It carries out the reaction L-fucose = L-fuculose. It participates in carbohydrate degradation; L-fucose degradation; L-lactaldehyde and glycerone phosphate from L-fucose: step 1/3. In terms of biological role, converts the aldose L-fucose into the corresponding ketose L-fuculose. In Escherichia coli (strain UTI89 / UPEC), this protein is L-fucose isomerase.